A 184-amino-acid polypeptide reads, in one-letter code: Lipoprotein signal peptidase (184 aa).

A run of 3 helical transmembrane segments spans residues Phe-23 to Phe-43, Pro-88 to Phe-108, and Thr-110 to Phe-130. Catalysis depends on residues Asp-142 and Asp-157. A helical membrane pass occupies residues Ala-156–Phe-176.

Belongs to the peptidase A8 family.

The protein resides in the cell membrane. It catalyses the reaction Release of signal peptides from bacterial membrane prolipoproteins. Hydrolyzes -Xaa-Yaa-Zaa-|-(S,diacylglyceryl)Cys-, in which Xaa is hydrophobic (preferably Leu), and Yaa (Ala or Ser) and Zaa (Gly or Ala) have small, neutral side chains.. It functions in the pathway protein modification; lipoprotein biosynthesis (signal peptide cleavage). Functionally, this protein specifically catalyzes the removal of signal peptides from prolipoproteins. The chain is Lipoprotein signal peptidase from Mycoplasma pneumoniae (strain ATCC 29342 / M129 / Subtype 1) (Mycoplasmoides pneumoniae).